Consider the following 354-residue polypeptide: Protein RecA (354 aa).

67–74 (GPESSGKT) contributes to the ATP binding site.

The protein belongs to the RecA family.

It localises to the cytoplasm. Can catalyze the hydrolysis of ATP in the presence of single-stranded DNA, the ATP-dependent uptake of single-stranded DNA by duplex DNA, and the ATP-dependent hybridization of homologous single-stranded DNAs. It interacts with LexA causing its activation and leading to its autocatalytic cleavage. The chain is Protein RecA from Hamiltonella defensa subsp. Acyrthosiphon pisum (strain 5AT).